The following is a 306-amino-acid chain: Zinc finger protein 625 (306 aa).

The segment at 31–53 adopts a C2H2-type 1; degenerate zinc-finger fold; it reads PRVKSCGEVSVGHASLNRHHRAD. C2H2-type zinc fingers lie at residues 69–91, 97–119, 125–147, 153–175, 181–203, 209–231, 237–259, and 265–287; these read YKCTYCKKAFSDLPYFRTHEWAH, YDCEECGKSFISRSSIRRHRIMH, YKCNFCGKALMCLSLYLIHKRTH, YECKQCGKAFSHSGSLRIHERTH, YECSECGKAFHSSTCLHAHKITH, YECKQCGKAFVSFNSVRYHERTH, YECKQCGKAFRSASHLRTHGRTH, and YECKQCGKAFGCASSVKIHERTH. Phosphotyrosine is present on Y209. The tract at residues 287 to 306 is disordered; that stretch reads HTGEKPCSSNTSKGQGEKIA.

The protein belongs to the krueppel C2H2-type zinc-finger protein family.

It is found in the nucleus. In terms of biological role, may be involved in transcriptional regulation. The polypeptide is Zinc finger protein 625 (ZNF625) (Homo sapiens (Human)).